The primary structure comprises 77 residues: MEKLTILLLVAAVLMSTQALIQSDGEKRQQAKINFLSXRKSTAESWWEGECKGWSVYCSWDWECCSGECTRYYCELW.

An N-terminal signal peptide occupies residues 1-19 (MEKLTILLLVAAVLMSTQA). Positions 20–38 (LIQSDGEKRQQAKINFLSX) are excised as a propeptide. Intrachain disulfides connect C51–C65, C58–C69, and C64–C74.

It belongs to the conotoxin O2 superfamily. Expressed by the venom duct.

It localises to the secreted. This is Conotoxin Bt6.6 from Conus betulinus (Beech cone).